Here is a 268-residue protein sequence, read N- to C-terminus: AN1-type zinc finger protein 1 (268 aa).

Residue A2 is modified to N-acetylalanine. AN1-type zinc fingers lie at residues 4 to 52 (LDIG…VVKE) and 58 to 106 (EHKS…VAKP). The Zn(2+) site is built by C10, C15, C25, C28, C33, H36, H42, C44, C64, C69, C79, C82, C87, H90, H96, and C98. Positions 160 to 260 (QTERTYFQVY…EYLNDEEQFL (101 aa)) are ubiquitin-like.

Associates with the 26S proteasome; this association occurs upon exposure to arsenite and is reduced in the presence of ATP. Interacts (via AN1-type 1 and 2 zinc fingers) with PSMD1; this interaction is increased upon arsenite treatment and occurs in an ATP-independent manner. Interacts with PSMC4. Interacts with PSMA1. Interacts (via its ubiquitin-like region) with VCP; this interaction occurs in an arsenite-dependent manner and is necessary for the recruitment of the ubiquitin-selective ATPase VCP to stress granules (SGs).

It is found in the cytoplasm. Its subcellular location is the stress granule. Its function is as follows. Plays a role in the regulation of cytoplasmic stress granules (SGs) turnover. SGs are dynamic and transient cytoplasmic ribonucleoprotein assemblies important for cellular protein homeostasis when protein production is suspended after acute exogenous stress. Associates with SGs and is involved in the efficient and specific arsenite-induced clearance process of SGs through the recruitment of the ubiquitin-selective ATPase VCP and the 26S proteasome. This process requires both complexes for efficient degradation of damaged ubiquitinated SG proteins during recovery from arsenite stress, and hence avoiding aberrant cytoplasmic SGs degradation via autophagy. The polypeptide is AN1-type zinc finger protein 1 (Mus musculus (Mouse)).